The chain runs to 326 residues: MPPYISAFQAAYIGIEVLIALVSVPGNVLVIWAVKVNQALRDATFCFIVSLAVADVAVGALVIPLAILINIGPQTYFHTCLMVACPVLILTQSSILALLAIAVDRYLRVKIPLRYKTVVTQRRAAVAIAGCWILSLVVGLTPMFGWNNLSVVEQDWRANGSVGEPVIKCEFEKVISMEYMVYFNFFVWVLPPLLLMVLIYLEVFYLIRKQLNKKVSASSGDPQKYYGKELKIAKSLALILFLFALSWLPLHILNCITLFCPTCQKPSILIYIAIFLTHGNSAMNPIVYAFRIHKFRVTFLKIWNDHFRCQPKPPIDEDLPEEKAED.

Over Met-1 to Ala-10 the chain is Extracellular. A helical membrane pass occupies residues Ala-11 to Ala-33. Residues Val-34–Cys-46 lie on the Cytoplasmic side of the membrane. Residues Phe-47–Ile-69 form a helical membrane-spanning segment. Residues Asn-70 to Cys-80 lie on the Extracellular side of the membrane. The cysteines at positions 80 and 169 are disulfide-linked. Residues Leu-81–Ala-102 form a helical membrane-spanning segment. The Cytoplasmic segment spans residues Val-103 to Arg-123. A helical membrane pass occupies residues Ala-124 to Trp-146. Topologically, residues Asn-147–Ser-176 are extracellular. Asn-148 and Asn-159 each carry an N-linked (GlcNAc...) asparagine glycan. A helical membrane pass occupies residues Met-177 to Leu-201. Residues Glu-202 to Ser-235 are Cytoplasmic-facing. Residues Leu-236–Phe-259 traverse the membrane as a helical segment. The Extracellular portion of the chain corresponds to Cys-260–Ser-267. Residues Ile-268–Ile-292 form a helical membrane-spanning segment. The Cytoplasmic portion of the chain corresponds to His-293–Asp-326. Cys-309 carries S-palmitoyl cysteine lipidation.

The protein belongs to the G-protein coupled receptor 1 family. In terms of tissue distribution, widely expressed in brain and spinal cord.

It localises to the cell membrane. Its function is as follows. Receptor for adenosine. The activity of this receptor is mediated by G proteins which inhibit adenylyl cyclase. The sequence is that of Adenosine receptor A1 (Adora1) from Rattus norvegicus (Rat).